We begin with the raw amino-acid sequence, 29 residues long: NADH dehydrogenase [ubiquinone] 1 beta subcomplex subunit 10 (29 aa).

The interval 1-29 (GRKKGVQFDEGAPDDFDPNNPYKKDVAFL) is disordered.

Belongs to the complex I NDUFB10 subunit family. Complex I is composed of about 45 different subunits.

The protein resides in the mitochondrion inner membrane. Functionally, accessory subunit of the mitochondrial membrane respiratory chain NADH dehydrogenase (Complex I), that is believed not to be involved in catalysis. Complex I functions in the transfer of electrons from NADH to the respiratory chain. The immediate electron acceptor for the enzyme is believed to be ubiquinone. The sequence is that of NADH dehydrogenase [ubiquinone] 1 beta subcomplex subunit 10 from Solanum tuberosum (Potato).